The following is a 613-amino-acid chain: Ethylene response sensor 1 (613 aa).

3 helical membrane-spanning segments follow: residues 23–43 (ISDA…IYFV), 58–78 (FGAF…MFFM), and 95–115 (AVVS…LLSV). Residues Cys65 and His69 each contribute to the Cu cation site. The GAF domain occupies 158–307 (DRHTILRTTL…NVADQVAVAL (150 aa)). Positions 350–589 (VMNHEMRTPM…SFIIRLGICN (240 aa)) constitute a Histidine kinase domain. Residue His353 is modified to Phosphohistidine; by autocatalysis.

The protein belongs to the ethylene receptor family. Homodimer; disulfide-linked. Heteromer with ETR1. Cu cation is required as a cofactor. Post-translationally, autophosphorylated on both His and Ser residues in the presence of manganese. Loss of His autophosphorylation in the presence of both manganese and magnesium. Expressed in etiolated seedlings, leaves, stems, roots, flowers, embryos, anthers, carpels and ovules.

Its subcellular location is the endoplasmic reticulum membrane. The enzyme catalyses ATP + protein L-histidine = ADP + protein N-phospho-L-histidine.. Functionally, ethylene receptor related to bacterial two-component regulators. Acts as a redundant negative regulator of ethylene signaling. The polypeptide is Ethylene response sensor 1 (ERS1) (Arabidopsis thaliana (Mouse-ear cress)).